The primary structure comprises 296 residues: Protein-export membrane protein SecF (296 aa).

The next 6 helical transmembrane spans lie at 23-43 (MIIY…ANYV), 144-164 (AIVY…RVPV), 169-189 (VVFS…IFGI), 194-214 (ATIA…ILLT), 236-256 (GFTM…FSTA), and 265-285 (VLIF…AGVL).

Belongs to the SecD/SecF family. SecF subfamily. As to quaternary structure, part of the protein translocation apparatus. Forms a complex with SecD.

The protein localises to the cell membrane. Functionally, involved in protein export. This is Protein-export membrane protein SecF from Pyrococcus furiosus (strain ATCC 43587 / DSM 3638 / JCM 8422 / Vc1).